A 214-amino-acid polypeptide reads, in one-letter code: Ribosomal RNA small subunit methyltransferase G (214 aa).

S-adenosyl-L-methionine is bound by residues G77, L82, V128–E129, and R143.

It belongs to the methyltransferase superfamily. RNA methyltransferase RsmG family.

The protein localises to the cytoplasm. It catalyses the reaction guanosine(527) in 16S rRNA + S-adenosyl-L-methionine = N(7)-methylguanosine(527) in 16S rRNA + S-adenosyl-L-homocysteine. In terms of biological role, specifically methylates the N7 position of guanine in position 527 of 16S rRNA. The protein is Ribosomal RNA small subunit methyltransferase G of Nitrosococcus oceani (strain ATCC 19707 / BCRC 17464 / JCM 30415 / NCIMB 11848 / C-107).